A 129-amino-acid polypeptide reads, in one-letter code: uncharacterized protein (129 aa).

A run of 2 helical transmembrane segments spans residues 35-55 and 98-118; these read IVDG…WKIP and ILLL…IILL.

The protein resides in the membrane. This is an uncharacterized protein from Saccharomyces cerevisiae (strain ATCC 204508 / S288c) (Baker's yeast).